A 91-amino-acid polypeptide reads, in one-letter code: Non-specific lipid-transfer protein 1 (91 aa).

Cystine bridges form between Cys-4/Cys-51, Cys-14/Cys-28, Cys-29/Cys-74, and Cys-49/Cys-88.

Belongs to the plant LTP family. As to expression, detected in seeds (at protein level).

Functionally, plant non-specific lipid-transfer proteins transfer phospholipids as well as galactolipids across membranes. May play a role in wax or cutin deposition in the cell walls of expanding epidermal cells and certain secretory tissues. The polypeptide is Non-specific lipid-transfer protein 1 (Carum carvi (Caraway)).